The sequence spans 343 residues: Cytoplasmic tRNA 2-thiolation protein 1 (343 aa).

Belongs to the TtcA family. CTU1/NCS6/ATPBD3 subfamily.

The protein resides in the cytoplasm. The protein operates within tRNA modification; 5-methoxycarbonylmethyl-2-thiouridine-tRNA biosynthesis. In terms of biological role, plays a central role in 2-thiolation of mcm(5)S(2)U at tRNA wobble positions of tRNA(Lys), tRNA(Glu) and tRNA(Gln). Directly binds tRNAs and probably acts by catalyzing adenylation of tRNAs, an intermediate required for 2-thiolation. It is unclear whether it acts as a sulfurtransferase that transfers sulfur from thiocarboxylated URM1 onto the uridine of tRNAs at wobble position. In Drosophila willistoni (Fruit fly), this protein is Cytoplasmic tRNA 2-thiolation protein 1.